A 675-amino-acid chain; its full sequence is DNA ligase (675 aa).

Residues 41–45, 90–91, and Glu-120 each bind NAD(+); these read DAEYD and SL. The active-site N6-AMP-lysine intermediate is Lys-122. Arg-143, Glu-178, Lys-295, and Lys-319 together coordinate NAD(+). Positions 413, 416, 431, and 436 each coordinate Zn(2+). The 80-residue stretch at 596–675 folds into the BRCT domain; that stretch reads GVPQTFAGKT…ADFLQLIDRV (80 aa).

It belongs to the NAD-dependent DNA ligase family. LigA subfamily. It depends on Mg(2+) as a cofactor. The cofactor is Mn(2+).

The enzyme catalyses NAD(+) + (deoxyribonucleotide)n-3'-hydroxyl + 5'-phospho-(deoxyribonucleotide)m = (deoxyribonucleotide)n+m + AMP + beta-nicotinamide D-nucleotide.. Its function is as follows. DNA ligase that catalyzes the formation of phosphodiester linkages between 5'-phosphoryl and 3'-hydroxyl groups in double-stranded DNA using NAD as a coenzyme and as the energy source for the reaction. It is essential for DNA replication and repair of damaged DNA. The polypeptide is DNA ligase (Heliobacterium modesticaldum (strain ATCC 51547 / Ice1)).